The following is a 206-amino-acid chain: Large ribosomal subunit protein uL3 (206 aa).

The interval 127–151 (SGGPSSHGSKFHRHLGGTGQATTPA) is disordered.

It belongs to the universal ribosomal protein uL3 family. As to quaternary structure, part of the 50S ribosomal subunit. Forms a cluster with proteins L14 and L19.

Its function is as follows. One of the primary rRNA binding proteins, it binds directly near the 3'-end of the 23S rRNA, where it nucleates assembly of the 50S subunit. The sequence is that of Large ribosomal subunit protein uL3 from Borreliella burgdorferi (strain ZS7) (Borrelia burgdorferi).